The primary structure comprises 298 residues: Tyrosine recombinase XerC (298 aa).

Residues 2–88 (TDLHTDVERY…ALRSFFDWLV (87 aa)) form the Core-binding (CB) domain. Residues 109–288 (HLPKNIDVDD…DFQHLASVYD (180 aa)) form the Tyr recombinase domain. Catalysis depends on residues R148, K172, H240, R243, and H266. The active-site O-(3'-phospho-DNA)-tyrosine intermediate is the Y275.

Belongs to the 'phage' integrase family. XerC subfamily. As to quaternary structure, forms a cyclic heterotetrameric complex composed of two molecules of XerC and two molecules of XerD, in which XerC interacts with XerD via its C-terminal region, XerD interacts with XerC via its C-terminal region and so on.

The protein resides in the cytoplasm. FtsK may regulate the catalytic switch between XerC and XerD in the heterotetrameric complex during the two steps of the recombination process. Its function is as follows. Site-specific tyrosine recombinase, which acts by catalyzing the cutting and rejoining of the recombining DNA molecules. Binds cooperatively to specific DNA consensus sequences that are separated from XerD binding sites by a short central region, forming the heterotetrameric XerC-XerD complex that recombines DNA substrates. The complex is essential to convert dimers of the bacterial chromosome into monomers to permit their segregation at cell division. It also contributes to the segregational stability of plasmids. In the complex XerC specifically exchanges the top DNA strands. This Escherichia coli O6:K15:H31 (strain 536 / UPEC) protein is Tyrosine recombinase XerC.